A 1170-amino-acid polypeptide reads, in one-letter code: RNA-binding protein 33 (1170 aa).

Disordered stretches follow at residues 1 to 152 (MAAA…EGHE) and 199 to 221 (KDIKEESDEEEEDDEESGRLRFK). The residue at position 2 (alanine 2) is an N-acetylalanine. Basic and acidic residues predominate over residues 20–36 (QFDKPGAERSWRRRAAD). Positions 37–49 (EDWDSELEDDLLG) are enriched in acidic residues. The residue at position 41 (serine 41) is a Phosphoserine. The segment covering 82 to 108 (FSSQGVTISLNATSGMVTSFELSDNTN) has biased composition (polar residues). Acidic residues-rich tracts occupy residues 112 to 126 (GEQESEYEQEQGEDE) and 203 to 214 (EESDEEEEDDEE). Phosphoserine is present on residues serine 205 and serine 233. 4 disordered regions span residues 259–708 (FEER…NSNL), 721–784 (MSSS…PDED), 833–863 (QLYAPPPPAEQEEQALSPSPTNGNPLLPFPG), and 942–1050 (AVPQ…VPPG). A compositionally biased stretch (basic residues) spans 267-278 (KQGRYSSRRGGR). Residues 289 to 306 (GDQRRESTERGRMKDHRP) are compositionally biased toward basic and acidic residues. Positions 311–329 (TQPPVVPQAPPPPPPPPQQ) are enriched in pro residues. Low complexity-rich tracts occupy residues 335 to 348 (LFQPQPLQPLLPVQ), 357 to 372 (QGMHMPPQLETPRMMM), and 394 to 403 (TVVTPVQVPL). Over residues 419 to 433 (FPGPPEFPQHTPGPV) the composition is skewed to pro residues. The residue at position 470 (arginine 470) is an Asymmetric dimethylarginine. Pro residues-rich tracts occupy residues 481–490 (SPPPPPPPPT), 554–568 (FIPPRQPFLPGPGQP), and 582–630 (LHPP…PQHP). Residues 632 to 642 (QHQHHHHHHHL) are compositionally biased toward basic residues. 2 stretches are compositionally biased toward polar residues: residues 662-708 (QTAQ…NSNL) and 721-732 (MSSSRCSATPSA). Residues serine 741 and serine 765 each carry the phosphoserine modification. Positions 789-835 (LYRLKIEEQKRLREEILKQKELRRQQQAGARKKELLERLAQQQQQLY) form a coiled coil. Phosphoserine is present on serine 951. Residue lysine 960 forms a Glycyl lysine isopeptide (Lys-Gly) (interchain with G-Cter in SUMO2) linkage. 2 positions are modified to phosphoserine: serine 973 and serine 991. Arginine 1028 is subject to Asymmetric dimethylarginine; alternate. Residue arginine 1028 is modified to Omega-N-methylarginine; alternate. The region spanning 1098–1170 (CVVSVEGLSS…SHINVALIVE (73 aa)) is the RRM domain.

As to quaternary structure, associates with the NXF1-NXT1 RNA export complex. Interacts with ALKBH5; facilitating ALKBH5 recruitment to m6A-containing transcripts. Interacts with SENP1; promoting ALKBH5 deSUMOylation and subsequent activation.

The protein resides in the nucleus. Its subcellular location is the cytoplasm. Functionally, RNA reader protein, which recognizes and binds specific RNAs, thereby regulating RNA metabolic processes, such as mRNA export, mRNA stability and/or translation. Binds a subset of intronless RNAs containing GC-rich elements, such as NORAD, and promotes their nuclear export by recruiting target RNAs to components of the NXF1-NXT1 RNA export machinery. Specifically recognizes and binds N6-methyladenosine (m6A)-containing mRNAs, promoting their demethylation by ALKBH5. Acts as an molecular adapter, which (1) promotes ALKBH5 recruitment to m6A-containing transcripts and (2) activates ALKBH5 demethylase activity by recruiting SENP1, leading to ALKBH5 deSUMOylation and subsequent activation. The chain is RNA-binding protein 33 from Homo sapiens (Human).